The sequence spans 393 residues: Acetylornithine aminotransferase (393 aa).

Residues 95 to 96 and Phe-127 contribute to the pyridoxal 5'-phosphate site; that span reads GA. Arg-130 contacts N(2)-acetyl-L-ornithine. 214-217 lines the pyridoxal 5'-phosphate pocket; it reads DEVQ. The residue at position 243 (Lys-243) is an N6-(pyridoxal phosphate)lysine. Ser-271 is a binding site for N(2)-acetyl-L-ornithine. A pyridoxal 5'-phosphate-binding site is contributed by Thr-272.

It belongs to the class-III pyridoxal-phosphate-dependent aminotransferase family. ArgD subfamily. In terms of assembly, homodimer. Requires pyridoxal 5'-phosphate as cofactor.

Its subcellular location is the cytoplasm. The catalysed reaction is N(2)-acetyl-L-ornithine + 2-oxoglutarate = N-acetyl-L-glutamate 5-semialdehyde + L-glutamate. The protein operates within amino-acid biosynthesis; L-arginine biosynthesis; N(2)-acetyl-L-ornithine from L-glutamate: step 4/4. The protein is Acetylornithine aminotransferase of Nitrosomonas europaea (strain ATCC 19718 / CIP 103999 / KCTC 2705 / NBRC 14298).